A 277-amino-acid chain; its full sequence is Type II restriction enzyme EcoRI (277 aa).

Catalysis depends on residues aspartate 91, glutamate 111, and lysine 113. Residues aspartate 91 and glutamate 111 each coordinate Mg(2+).

This sequence belongs to the EcoRI type II restriction endonuclease family. Homodimer. The cofactor is Mg(2+).

The catalysed reaction is Endonucleolytic cleavage of DNA to give specific double-stranded fragments with terminal 5'-phosphates.. Functionally, a P subtype restriction enzyme that recognizes the double-stranded sequence 5'-GAATTC-3' and cleaves after G-1. This is Type II restriction enzyme EcoRI (ecoRIR) from Escherichia coli.